Reading from the N-terminus, the 356-residue chain is 3-isopropylmalate dehydrogenase (356 aa).

Position 73–86 (73–86) interacts with NAD(+); it reads GTQYDGLPREKRPE. Residues Arg93, Arg103, Arg131, and Asp220 each contribute to the substrate site. Mg(2+) contacts are provided by Asp220, Asp244, and Asp248. NAD(+) is bound at residue 278-290; the sequence is GSAPDIAGKGIAN.

Belongs to the isocitrate and isopropylmalate dehydrogenases family. LeuB type 1 subfamily. Homodimer. Requires Mg(2+) as cofactor. It depends on Mn(2+) as a cofactor.

Its subcellular location is the cytoplasm. The enzyme catalyses (2R,3S)-3-isopropylmalate + NAD(+) = 4-methyl-2-oxopentanoate + CO2 + NADH. It participates in amino-acid biosynthesis; L-leucine biosynthesis; L-leucine from 3-methyl-2-oxobutanoate: step 3/4. Functionally, catalyzes the oxidation of 3-carboxy-2-hydroxy-4-methylpentanoate (3-isopropylmalate) to 3-carboxy-4-methyl-2-oxopentanoate. The product decarboxylates to 4-methyl-2 oxopentanoate. In Nitrosomonas europaea (strain ATCC 19718 / CIP 103999 / KCTC 2705 / NBRC 14298), this protein is 3-isopropylmalate dehydrogenase.